The chain runs to 391 residues: uncharacterized protein (391 aa).

Transmembrane regions (helical) follow at residues 7 to 27 (FILV…LPVI), 39 to 59 (AING…SPFM), 66 to 88 (LGFK…GFIW), 92 to 111 (VWVW…MLHF), 131 to 151 (SIYG…VPLV), 156 to 176 (SLPF…VFFL), 197 to 217 (FYQA…YGFL), 239 to 259 (VAII…PLGI), 269 to 289 (VLLV…VFPS), 292 to 312 (VIGG…TLGI), 329 to 349 (LLCG…GGWY), and 356 to 376 (ANLF…LVLG).

The protein belongs to the major facilitator superfamily.

The protein resides in the cell membrane. This is an uncharacterized protein from Bacillus subtilis (strain 168).